A 1876-amino-acid polypeptide reads, in one-letter code: Phenolphthiocerol/phthiocerol polyketide synthase subunit A (1876 aa).

The Carrier 1 domain occupies 9 to 83; sequence ADLRHWLIDY…ALAAYLAAPE (75 aa). S43 carries the O-(pantetheine 4'-phosphoryl)serine modification. In terms of domain architecture, Ketosynthase family 3 (KS3) spans 101–526; it reads DEPIAVVGMG…GTNAHVVIEQ (426 aa). Active-site for beta-ketoacyl synthase activity residues include C273, H408, and H448. Residues 624–950 form an acyltransferase region; the sequence is EGSPGPGTVF…NLNKAHTIHP (327 aa). The For malonyltransferase activity role is filled by S720. Positions 997–1112 are N-terminal hotdog fold; that stretch reads HTTVATVSAS…AQLSSSPSDS (116 aa). Positions 997-1267 constitute a PKS/mFAS DH domain; it reads HTTVATVSAS…YRALDFGLDV (271 aa). H1027 functions as the Proton acceptor; for dehydratase activity in the catalytic mechanism. Positions 1104–1130 are disordered; it reads QLSSSPSDSASSLNEHHRANGQPPERA. The segment covering 1106 to 1115 has biased composition (low complexity); that stretch reads SSSPSDSASS. Residues 1130–1267 form a C-terminal hotdog fold region; that stretch reads AHRDLIPDLA…YRALDFGLDV (138 aa). Catalysis depends on D1186, which acts as the Proton donor; for dehydratase activity. The interval 1491–1728 is beta-ketoacyl reductase; that stretch reads AAYLITGGLG…DGYDVAQAVV (238 aa). Residue 1492-1551 coordinates NADP(+); it reads AYLITGGLGALGLLMADWLADRGAHRLVLTGRTPLPPRRDWQLDTLDTELRRRIDAIRAL. The Carrier 2 domain occupies 1759 to 1836; that stretch reads EVRSELEQGL…SLASYLAKRV (78 aa). Position 1796 is an O-(pantetheine 4'-phosphoryl)serine (S1796).

The cofactor is NADP(+). It depends on pantetheine 4'-phosphate as a cofactor.

The enzyme catalyses icosanoyl-[(phenol)carboxyphthiodiolenone synthase] + 2 (S)-methylmalonyl-CoA + 3 malonyl-CoA + 5 NADPH + 10 H(+) = C32-carboxyphthiodiolenone-[(phenol)carboxyphthiodiolenone synthase] + 5 CO2 + 5 NADP(+) + 5 CoA + 2 H2O. It carries out the reaction docosanoyl-[(phenol)carboxyphthiodiolenone synthase] + 2 (S)-methylmalonyl-CoA + 3 malonyl-CoA + 5 NADPH + 10 H(+) = C34-carboxyphthiodiolenone-[(phenol)carboxyphthiodiolenone synthase] + 5 CO2 + 5 NADP(+) + 5 CoA + 2 H2O. The catalysed reaction is 17-(4-hydroxyphenyl)heptadecanoyl-[(phenol)carboxyphthiodiolenone synthase] + 2 (S)-methylmalonyl-CoA + 3 malonyl-CoA + 5 NADPH + 10 H(+) = C35-(phenol)carboxyphthiodiolenone-[(phenol)carboxyphthiodiolenone synthase] + 5 CO2 + 5 NADP(+) + 5 CoA + 2 H2O. It catalyses the reaction 19-(4-hydroxyphenyl)nonadecanoyl-[(phenol)carboxyphthiodiolenone synthase] + 2 (S)-methylmalonyl-CoA + 3 malonyl-CoA + 5 NADPH + 10 H(+) = C37-(phenol)carboxyphthiodiolenone-[(phenol)carboxyphthiodiolenone synthase] + 5 CO2 + 5 NADP(+) + 5 CoA + 2 H2O. It functions in the pathway lipid metabolism; fatty acid biosynthesis. Functionally, part of the PpsABCDE complex involved in the biosynthesis of the lipid core common to phthiocerols and phenolphthiocerols by successive additions of malonyl-CoA or methylmalonyl-CoA extender units. PpsA can accept as substrate the activated forms of either icosanoyl (C20), docosanoyl (C22) or lignoceroyl (C24) groups from FadD26, or a (4-hydroxyphenyl)-C17 or (4-hydroxyphenyl)-C19 fatty acyl from FadD29. PpsA initiates the biosynthesis and extends its substrate using a malonyl-CoA extender unit. The PpsB and PpsC proteins add the second and third malonyl-CoA extender units. PpsD adds an (R)-methylmalonyl unit and PpsE adds a second (R)-methylmalonyl unit. The incorporation of the methylmalonyl units results in formation of two branched methyl groups in the elongated product. In Mycobacterium bovis (strain ATCC BAA-935 / AF2122/97), this protein is Phenolphthiocerol/phthiocerol polyketide synthase subunit A (ppsA).